A 646-amino-acid chain; its full sequence is MRSSSAGTPFTAQYACEICRERKVRCDRALPKCRRCDRLNQPCSYNQAHQRRTRDEQLKQLQERLAKTEAQLAMNTTAAPLSVRSQSRSEGTELASSTRWIGTPDSFTPNSCSRRSSQYQLPTTSTSQSQLGSVLGTTAANTPMDLDNIRGMSATSGMSTNGSSLFDSDLFTSFTEGADSNMTFAWTNQPLMALEPLDNMLLNRPQSAPPNGSEEDLSPTDLSLLHNHYFESVYFSFPFINRDRFTAEKTGSRSPATTALVYAVALAGCTRSLQDHNRQSTCYGLARNYAERCEQEDHLNDLNFLQALLLIGRFEAMNRKLERSGLTLGRAAMLCKLLKLHQMDKSEHSQGMQNRETQSGPRLALPHTKDPVLLEERRRTFWGLYILQSYVRTRTGWEFQLEDTKNLQINLPSPGLLRSDLEPLKMPSLLNISTEPAPEITSYAGCVLMVELALRCFDNGQKRDTPGFWDDYCALVKKTDDLFKTLKRHLNATSIREDPVAFSLYLNLRATEIFSHDSAITKNEEQGLPPLMVAESQRRATTAAFQICSAVGLNLPSPWKADSDIIMLQAIFIAWPLTMALKALYRELVRGGIRETVNGVVASIRLLFAALDHIEESDGHWHQCVTNVEAKLQEWDEKNSFDSLAL.

The zn(2)-C6 fungal-type DNA-binding region spans 16-43 (CEICRERKVRCDRALPKCRRCDRLNQPC). 2 disordered regions span residues 76-130 (TTAA…SQSQ) and 345-366 (KSEHSQGMQNRETQSGPRLALP). Over residues 349 to 360 (SQGMQNRETQSG) the composition is skewed to polar residues.

Its subcellular location is the nucleus. Transcription factor that positively regulates the expression of the gene cluster that mediates the biosynthesis of depudecin, a highly oxidized eleven-carbon linear polyketide that acts as a histone deacetylase (HDAC) inhibitor and makes a small contribution to pathogenesis. The sequence is that of Depudecin biosynthesis cluster-specific transcription activator DEP6 from Alternaria brassicicola (Dark leaf spot agent).